A 333-amino-acid polypeptide reads, in one-letter code: Phosphoribosylformylglycinamidine cyclo-ligase (333 aa).

This sequence belongs to the AIR synthase family.

It is found in the cytoplasm. The catalysed reaction is 2-formamido-N(1)-(5-O-phospho-beta-D-ribosyl)acetamidine + ATP = 5-amino-1-(5-phospho-beta-D-ribosyl)imidazole + ADP + phosphate + H(+). It participates in purine metabolism; IMP biosynthesis via de novo pathway; 5-amino-1-(5-phospho-D-ribosyl)imidazole from N(2)-formyl-N(1)-(5-phospho-D-ribosyl)glycinamide: step 2/2. This chain is Phosphoribosylformylglycinamidine cyclo-ligase, found in Clostridium perfringens (strain ATCC 13124 / DSM 756 / JCM 1290 / NCIMB 6125 / NCTC 8237 / Type A).